The following is a 526-amino-acid chain: ATP synthase subunit alpha (526 aa).

171 to 178 (GDRQTGKT) contributes to the ATP binding site.

This sequence belongs to the ATPase alpha/beta chains family. F-type ATPases have 2 components, CF(1) - the catalytic core - and CF(0) - the membrane proton channel. CF(1) has five subunits: alpha(3), beta(3), gamma(1), delta(1), epsilon(1). CF(0) has four main subunits: a(1), b(1), b'(1) and c(9-12).

It is found in the cell inner membrane. It carries out the reaction ATP + H2O + 4 H(+)(in) = ADP + phosphate + 5 H(+)(out). Produces ATP from ADP in the presence of a proton gradient across the membrane. The alpha chain is a regulatory subunit. This chain is ATP synthase subunit alpha, found in Chlorobium phaeovibrioides (strain DSM 265 / 1930) (Prosthecochloris vibrioformis (strain DSM 265)).